A 119-amino-acid chain; its full sequence is Large ribosomal subunit protein uL18 (119 aa).

The disordered stretch occupies residues 1-25 (MITKIDKNKVRKKRHARVRSKISGT). Positions 9–20 (KVRKKRHARVRS) are enriched in basic residues.

Belongs to the universal ribosomal protein uL18 family. In terms of assembly, part of the 50S ribosomal subunit; part of the 5S rRNA/L5/L18/L25 subcomplex. Contacts the 5S and 23S rRNAs.

In terms of biological role, this is one of the proteins that bind and probably mediate the attachment of the 5S RNA into the large ribosomal subunit, where it forms part of the central protuberance. In Listeria innocua serovar 6a (strain ATCC BAA-680 / CLIP 11262), this protein is Large ribosomal subunit protein uL18.